We begin with the raw amino-acid sequence, 1300 residues long: DNA-directed RNA polymerase subunit beta (1300 aa).

The protein belongs to the RNA polymerase beta chain family. The RNAP catalytic core consists of 2 alpha, 1 beta, 1 beta' and 1 omega subunit. When a sigma factor is associated with the core the holoenzyme is formed, which can initiate transcription.

The enzyme catalyses RNA(n) + a ribonucleoside 5'-triphosphate = RNA(n+1) + diphosphate. Functionally, DNA-dependent RNA polymerase catalyzes the transcription of DNA into RNA using the four ribonucleoside triphosphates as substrates. This chain is DNA-directed RNA polymerase subunit beta, found in Chlorobium chlorochromatii (strain CaD3).